Reading from the N-terminus, the 63-residue chain is MKASELKEKSVEELQQTQIELLEEQFKLRMKSASGQISKTHELGTVRRNIARVKTILREKQGN.

Belongs to the universal ribosomal protein uL29 family.

This is Large ribosomal subunit protein uL29 from Alcanivorax borkumensis (strain ATCC 700651 / DSM 11573 / NCIMB 13689 / SK2).